The chain runs to 101 residues: UPF0473 protein LAF_0524 (101 aa).

It belongs to the UPF0473 family.

The chain is UPF0473 protein LAF_0524 from Limosilactobacillus fermentum (strain NBRC 3956 / LMG 18251) (Lactobacillus fermentum).